Here is a 330-residue protein sequence, read N- to C-terminus: WRKY transcription factor WRKY51 (330 aa).

A disordered region spans residues 39–61 (QTGTSERSPAPAPAQEQQQQQQV). Residues 51–60 (PAQEQQQQQQ) are compositionally biased toward low complexity. The Nuclear localization signal motif lies at 74–81 (FKKVISML). 2 disordered regions span residues 91-117 (RGPV…SAVS) and 302-330 (YEGE…LPLA). The segment covering 101–117 (PAASEPAPVRSSPSAVS) has biased composition (low complexity). The segment at residues 245 to 311 (KVADIPADDF…YEGEHRHTPS (67 aa)) is a DNA-binding region (WRKY). A compositionally biased stretch (pro residues) spans 318 to 330 (PPAPPPPLALPLA).

This sequence belongs to the WRKY group II-a family. Highly expressed in aleurone cells. In seeds, predominantly present in the plumule, radicle and scutellum of the embryo.

It is found in the nucleus. Its function is as follows. Transcription factor. Interacts, when in complex with WRKY71, specifically with the W box (5'-(T)TGAC[CT]-3'), a frequently occurring elicitor-responsive cis-acting element. Represses specifically gibberellic acid (GA)-induced promoters in aleurone cells, probably by interfering with GAM1. The protein is WRKY transcription factor WRKY51 of Oryza sativa subsp. indica (Rice).